The chain runs to 120 residues: uncharacterized protein (120 aa).

Residues Asn29 and Asn68 are each glycosylated (N-linked (GlcNAc...) asparagine; by host). Residues 74 to 94 form a helical membrane-spanning segment; sequence IFNGLGFILIVIFIYLLIITL.

Belongs to the asfivirus B117L family.

The protein resides in the host membrane. It is found in the virion. This is an uncharacterized protein from Ornithodoros (relapsing fever ticks).